The primary structure comprises 420 residues: Phosphoribosylamine--glycine ligase (420 aa).

The region spanning 108 to 314 is the ATP-grasp domain; the sequence is KQIMVKYGIP…FAQNIDDILH (207 aa). Residue 134–195 coordinates ATP; the sequence is IEEQGAPIVV…EEFLAGEEFS (62 aa). Mg(2+) contacts are provided by E284 and N286.

Belongs to the GARS family. Requires Mg(2+) as cofactor. It depends on Mn(2+) as a cofactor.

It carries out the reaction 5-phospho-beta-D-ribosylamine + glycine + ATP = N(1)-(5-phospho-beta-D-ribosyl)glycinamide + ADP + phosphate + H(+). It participates in purine metabolism; IMP biosynthesis via de novo pathway; N(1)-(5-phospho-D-ribosyl)glycinamide from 5-phospho-alpha-D-ribose 1-diphosphate: step 2/2. This Streptococcus suis protein is Phosphoribosylamine--glycine ligase.